The sequence spans 314 residues: Putative glycosyltransferase ORF31 (314 aa).

The protein belongs to the glycosyltransferase group 1 family.

This chain is Putative glycosyltransferase ORF31, found in Haloarcula hispanica (His1V).